The chain runs to 1485 residues: Chromosome partition protein MukB (1485 aa).

34–41 (GGNGAGKS) is a binding site for ATP. 6 coiled-coil regions span residues 337 to 480 (LNLV…QAYQ), 509 to 605 (QHLA…PVWL), 780 to 805 (RAAR…ATLS), 835 to 915 (EAEI…IQQH), 977 to 1116 (GMLT…AKAG), and 1210 to 1235 (EAIE…KLAI). Residues 666-783 (PSGAEDARLI…EVPLFGRAAR (118 aa)) are flexible hinge.

Belongs to the SMC family. MukB subfamily. As to quaternary structure, homodimerization via its hinge domain. Binds to DNA via its C-terminal region. Interacts, and probably forms a ternary complex, with MukE and MukF via its C-terminal region. The complex formation is stimulated by calcium or magnesium. Interacts with tubulin-related protein FtsZ.

It localises to the cytoplasm. The protein resides in the nucleoid. Functionally, plays a central role in chromosome condensation, segregation and cell cycle progression. Functions as a homodimer, which is essential for chromosome partition. Involved in negative DNA supercoiling in vivo, and by this means organize and compact chromosomes. May achieve or facilitate chromosome segregation by condensation DNA from both sides of a centrally located replisome during cell division. The chain is Chromosome partition protein MukB from Yersinia pestis bv. Antiqua (strain Antiqua).